Consider the following 236-residue polypeptide: Phosphoribosylaminoimidazole-succinocarboxamide synthase (236 aa).

The protein belongs to the SAICAR synthetase family.

The catalysed reaction is 5-amino-1-(5-phospho-D-ribosyl)imidazole-4-carboxylate + L-aspartate + ATP = (2S)-2-[5-amino-1-(5-phospho-beta-D-ribosyl)imidazole-4-carboxamido]succinate + ADP + phosphate + 2 H(+). It functions in the pathway purine metabolism; IMP biosynthesis via de novo pathway; 5-amino-1-(5-phospho-D-ribosyl)imidazole-4-carboxamide from 5-amino-1-(5-phospho-D-ribosyl)imidazole-4-carboxylate: step 1/2. The chain is Phosphoribosylaminoimidazole-succinocarboxamide synthase from Lysinibacillus sphaericus (strain C3-41).